The primary structure comprises 278 residues: Tryptophan synthase alpha chain (278 aa).

Catalysis depends on proton acceptor residues glutamate 49 and aspartate 60.

It belongs to the TrpA family. As to quaternary structure, tetramer of two alpha and two beta chains.

The catalysed reaction is (1S,2R)-1-C-(indol-3-yl)glycerol 3-phosphate + L-serine = D-glyceraldehyde 3-phosphate + L-tryptophan + H2O. Its pathway is amino-acid biosynthesis; L-tryptophan biosynthesis; L-tryptophan from chorismate: step 5/5. Functionally, the alpha subunit is responsible for the aldol cleavage of indoleglycerol phosphate to indole and glyceraldehyde 3-phosphate. The protein is Tryptophan synthase alpha chain of Granulibacter bethesdensis (strain ATCC BAA-1260 / CGDNIH1).